The sequence spans 305 residues: Cytochrome c biogenesis protein CcsA (305 aa).

Transmembrane regions (helical) follow at residues 13-33, 42-62, 70-90, 97-117, 135-155, 212-232, 242-262, and 276-296; these read IYFS…VYPV, KGII…WFYS, LYES…FIDI, WIGV…TLIL, WLIM…CGSL, YTIV…AVWA, WDPK…YIHI, and VASL…ILGI.

The protein belongs to the CcmF/CycK/Ccl1/NrfE/CcsA family. In terms of assembly, may interact with Ccs1.

It localises to the plastid. Its subcellular location is the chloroplast thylakoid membrane. Functionally, required during biogenesis of c-type cytochromes (cytochrome c6 and cytochrome f) at the step of heme attachment. This Welwitschia mirabilis (Tree tumbo) protein is Cytochrome c biogenesis protein CcsA.